A 238-amino-acid polypeptide reads, in one-letter code: Nuclear transcription factor Y subunit B-9 (238 aa).

A DNA-binding region spans residues Met-64–Ile-70. Positions Ile-91–Val-102 are subunit association domain (SAD). The segment at Arg-203–Lys-238 is disordered. The segment covering Gly-208–Gly-227 has biased composition (low complexity).

This sequence belongs to the NFYB/HAP3 subunit family. As to quaternary structure, heterotrimeric transcription factor composed of three components, NF-YA, NF-YB and NF-YC. NF-YB and NF-YC must interact and dimerize for NF-YA association and DNA binding. Interacts with PRN1. In terms of tissue distribution, expressed in green siliques. Present in etiolated seedlings.

Its subcellular location is the nucleus. Functionally, component of the NF-Y/HAP transcription factor complex. The NF-Y complex stimulates the transcription of various genes by recognizing and binding to a CCAAT motif in promoters. Acts as a central regulator of the embryogenesis. Required for the speciation of cotyledon identity and the completion of embryo maturation. Controls seed storage protein genes through the regulation of FUS3 and ABI3. Involved in the blue light (BL) and abscisic acid (ABA) signaling pathways. The protein is Nuclear transcription factor Y subunit B-9 (NFYB9) of Arabidopsis thaliana (Mouse-ear cress).